Consider the following 108-residue polypeptide: PTS system cellobiose-specific EIIB component (108 aa).

The region spanning 3–108 (DKVIALACAA…VLAAAENLMN (106 aa)) is the PTS EIIB type-3 domain. The active-site Phosphocysteine intermediate is the Cys-10. The residue at position 10 (Cys-10) is a Phosphocysteine; by EIIA.

The catalysed reaction is D-cellobiose(out) + N(pros)-phospho-L-histidyl-[protein] = 6-phospho-beta-D-glucosyl-(1-&gt;4)-D-glucose(in) + L-histidyl-[protein]. Functionally, the phosphoenolpyruvate-dependent sugar phosphotransferase system (sugar PTS), a major carbohydrate active transport system, catalyzes the phosphorylation of incoming sugar substrates concomitantly with their translocation across the cell membrane. Involved in cellobiose transport with PtcA and CelB. This system can also transport lactose. In Lactococcus lactis subsp. lactis (strain IL1403) (Streptococcus lactis), this protein is PTS system cellobiose-specific EIIB component.